Reading from the N-terminus, the 400-residue chain is Acetate kinase (400 aa).

A Mg(2+)-binding site is contributed by N10. K17 is a binding site for ATP. A substrate-binding site is contributed by R91. The Proton donor/acceptor role is filled by D150. ATP is bound by residues 210–214 (HLGNG), 285–287 (DCR), and 333–337 (GIGEN). E387 is a Mg(2+) binding site.

This sequence belongs to the acetokinase family. Homodimer. Mg(2+) serves as cofactor. The cofactor is Mn(2+).

Its subcellular location is the cytoplasm. The enzyme catalyses acetate + ATP = acetyl phosphate + ADP. It participates in metabolic intermediate biosynthesis; acetyl-CoA biosynthesis; acetyl-CoA from acetate: step 1/2. Catalyzes the formation of acetyl phosphate from acetate and ATP. Can also catalyze the reverse reaction. The protein is Acetate kinase of Yersinia pseudotuberculosis serotype IB (strain PB1/+).